Consider the following 434-residue polypeptide: MHVIVLGSGVIGTTTAYYLARQGAKVTVLDRQPEAACETSYANAGQVSPGYSTPWAAPGIPFKALKWLFQKDAPLAIRPDGTLYQWRWMAAMLANCTAGRYTVNKERMLRLAEYSRDCLRELRADTGIQYEARTLGTLQLFRSASQYQAAQRDIQVLDACGVPYELLDSARLQTVEPALARTAHKLAGGLRLPNDETGDCRLFTRRLAQLAAGLGVEFRYGQDVEALVAGGAEIRGVRVGGETLAADRYVAAFGSYTRGFLAPLGLELPVYPVKGYSLTIPLASAEAAPVSTVLDETYKVAITRFDNRIRVGGMAELAGFDLGLNPAHRRTLEHVVTDLYPGCGEVAQAEFWTGLRPMTPDSTPIVGATRYANLFLNTGHGTLGWTMACGSGKVVADLVTGQRPAIRADDLALARYQAAQTRHAGPALGERSAA.

3-17 (VIVLGSGVIGTTTAY) contacts FAD.

The protein belongs to the DadA oxidoreductase family. Requires FAD as cofactor.

It catalyses the reaction a D-alpha-amino acid + A + H2O = a 2-oxocarboxylate + AH2 + NH4(+). Its pathway is amino-acid degradation; D-alanine degradation; NH(3) and pyruvate from D-alanine: step 1/1. In terms of biological role, oxidative deamination of D-amino acids. The sequence is that of D-amino acid dehydrogenase from Bordetella petrii (strain ATCC BAA-461 / DSM 12804 / CCUG 43448).